The sequence spans 1225 residues: MAQTNGEMEHSKESPEQITNGNNQEVVQEDDGAGGLFQISVKLPHEPYKIQVMVSSQEQVQDVRQSIVELPGTFQYTCFHLEFNGKRINDFVELSEVPGLQADSEIVLVEDPYTEKDARMHVVRLRELLGAAGDRVDTINGVNAGLSLHDSIAAEAGSEKSEKEHSLAKYDIPGSSSLKTILPRSEAPAPKTVKSISLSPWNPPPHHLRQKGHLLYLQVTTNEGEQFQITSHVSGFFVNKCSNSRFDPFPKTIPKKGSAHSLLNLISQLSPSFDAAFKELQESNNQKDLLTTFPFQNSIPSSPWLVAPPASNSLQTTKELPRETVQDRVFRERLTSKLFADYNEAAARGAVLVARGEVAPLNPTEAQDAQIFVYNNIFYSFGADGVGTFASEGGDEAARVAVGKDVLGIKAVNQLDINGLFTPGTIVVDYMGKRIVGQSIVPGIFKQREPGEHQIDYGGVEGKDVVATHPDFVPVFEKLSKALRIKKHPVWDKDNQRHDLEGSVETKGLLGTDGRKYVLDLYRVTPLDVAWNEEEDGDAYPHRMSVLRLELVESYWRAKMSQYVKAEVERRRAAKAEEAAKKEKSSEDTESKEEGSEEKSEEALDQERVDISGFSLALNPDVFSGQIPQTDEEKEQWAQDEKEVRDACDFLRSKVMPELIQDLHDGDVGFPMDGQSLSQLLHKRGINIRYLGKLATLAKEKGSRLEALSTLLVQEMVVRAFKHITNKYLRNVPAPFAASCVAHLLNCLLGADVNATPRAEIDSSLREIYPEGDFSFEKVTPEALRAEIEKQVTLRYRFNLESQWFNSLRHLQLLRDIAIKLGLQLAARDFVFTKAQAEGLKVLPVANGVNGTGQDEGSKKKKKNKNGDSGSPARSAAAEKPIVTFTPDDIVNIVPLVKDASPRSSLAEEALEAGRISLMQNQKQLGQELILESLSLHEQIYGILHPEVAKLYHQLSMLYYQTDEKDAAVELARKAVIVTERTLGVDSADTILSYLNLSLFEHASGNTKVALAYIKHAMDLWKIIFGSNHPDSITTMNNAAVMLQHLKQYSDSRKWFEASLSVCESLFGKQSINTATILFQLAQALALDQDSKAAVGKMRDAYNIFLSQLGPEDRNTKEAETWLEQLTQNAVSIAKHAKDIQARRLRRINMGTRTTLGTQIQPQVGQSTADVSAPSQASNSSIDSRNIDELLKFIEGGDTSSSRTKQKKRAAASNPKLRGSKKSSA.

Residues 1–22 (MAQTNGEMEHSKESPEQITNGN) are disordered. In terms of domain architecture, Clu spans 281–532 (QESNNQKDLL…RVTPLDVAWN (252 aa)). Disordered stretches follow at residues 577-605 (EEAA…EALD) and 846-878 (ANGV…SAAA). 3 TPR repeats span residues 949 to 982 (AKLY…TERT), 991 to 1024 (ILSY…WKII), and 1033 to 1066 (ITTM…CESL). The segment covering 1153–1184 (RTTLGTQIQPQVGQSTADVSAPSQASNSSIDS) has biased composition (polar residues). Residues 1153–1225 (RTTLGTQIQP…KLRGSKKSSA (73 aa)) are disordered.

Belongs to the CLU family. May associate with the eukaryotic translation initiation factor 3 (eIF-3) complex.

The protein resides in the cytoplasm. Its function is as follows. mRNA-binding protein involved in proper cytoplasmic distribution of mitochondria. This chain is Clustered mitochondria protein homolog, found in Emericella nidulans (strain FGSC A4 / ATCC 38163 / CBS 112.46 / NRRL 194 / M139) (Aspergillus nidulans).